A 966-amino-acid polypeptide reads, in one-letter code: Alanine--tRNA ligase, cytoplasmic (966 aa).

Histidine 604, histidine 608, cysteine 723, and histidine 727 together coordinate Zn(2+).

Belongs to the class-II aminoacyl-tRNA synthetase family. As to quaternary structure, monomer. Requires Zn(2+) as cofactor.

The protein resides in the cytoplasm. It carries out the reaction tRNA(Ala) + L-alanine + ATP = L-alanyl-tRNA(Ala) + AMP + diphosphate. Its function is as follows. Catalyzes the attachment of alanine to tRNA(Ala) in a two-step reaction: alanine is first activated by ATP to form Ala-AMP and then transferred to the acceptor end of tRNA(Ala). Also edits incorrectly charged tRNA(Ala) via its editing domain. The polypeptide is Alanine--tRNA ligase, cytoplasmic (Drosophila melanogaster (Fruit fly)).